We begin with the raw amino-acid sequence, 382 residues long: MSVLLIEAFYGGSHKQLMDLLQEELKEECVLCTLPAKKWHWKARTAALYFMQTVPASANYRILFASSVLNLAELAALRPDLGKLKKVLYFHENQLAYPVQKCKERDFQCGYNQVLSCLVADTVVFNSAFNMESFLTSIGKFMKLIPDHRPKDLEKIIRPKCQVLYFPVRFPDVSRFMPEHKLAHLENVIGVKRNGDFYQREGLPGQQKSRALGGLMKNSNACRESGLCETQPGLCTTQHEGLHSPLTAAGRLNKSEASESTNPCQEEDKQHVTFNLCNIWSGMDYLQRPLHVVWPHRWEHDKDPETFFKVLLKLKEQELPFHVSVLGETFTDVPGWKRCIVAVTRCVPRPWCTRRSSQLNICILHLNSFLKGFRISARDQIL.

The protein belongs to the glycosyltransferase group 1 family. Glycosyltransferase 4 subfamily.

It is found in the cytoplasm. Its subcellular location is the nucleus. It carries out the reaction queuosine(34) in tRNA(Asp) + GDP-alpha-D-mannose = O-4''-alpha-D-mannosylqueuosine(34) in tRNA(Asp) + GDP + H(+). Functionally, glycosyltransferase that specifically catalyzes mannosylation of cytoplasmic tRNA(Asp) modified with queuosine at position 34 (queuosine(34)). Mannosylates the cyclopentene moiety of queuosine(34) in tRNA(Asp) to form mannosyl-queuosine(34). Mannosylation of queuosine(34) in tRNA(Asp) is required to slow-down elongation at cognate codons, GAC and GAU, thereby regulating protein translation. This chain is tRNA-queuosine alpha-mannosyltransferase (GTDC1), found in Gallus gallus (Chicken).